We begin with the raw amino-acid sequence, 220 residues long: Translation initiation factor IF-3 (220 aa).

The tract at residues 182–220 (TPLVKKDDKEEPATRAVRTITAPPRPTSARLASKPAGNG) is disordered. Residues 185 to 194 (VKKDDKEEPA) are compositionally biased toward basic and acidic residues.

It belongs to the IF-3 family. As to quaternary structure, monomer.

It localises to the cytoplasm. Its function is as follows. IF-3 binds to the 30S ribosomal subunit and shifts the equilibrium between 70S ribosomes and their 50S and 30S subunits in favor of the free subunits, thus enhancing the availability of 30S subunits on which protein synthesis initiation begins. The chain is Translation initiation factor IF-3 from Synechococcus sp. (strain WH7803).